The sequence spans 233 residues: Antilisterial bacteriocin subtilosin biosynthesis protein AlbG (233 aa).

The next 6 membrane-spanning stretches (helical) occupy residues 7–27, 46–66, 116–136, 145–165, 176–198, and 203–220; these read FTLLLLLIGMAAYSFGWVQAV, GLLACTAALLMLPAFLYLHYV, TYVMAAVLCQVIIFGCMFEIV, TPPAFSMGLAMLLILYLLFCM, GSLFRKVFAGALAAAGIWWMLSF, and LLFLIILAAIQQIGSFIY.

It localises to the cell membrane. In terms of biological role, involved in the production of the bacteriocin subtilosin. The chain is Antilisterial bacteriocin subtilosin biosynthesis protein AlbG (albG) from Bacillus subtilis (strain 168).